Here is a 284-residue protein sequence, read N- to C-terminus: Tropomyosin-2 (284 aa).

Residues 1–284 (MDAIKKKMQA…DQTFAELTGY (284 aa)) adopt a coiled-coil conformation. A disordered region spans residues 82 to 110 (ESEVATQNRKVQQIEEDLEKSEERSTTAQ).

This sequence belongs to the tropomyosin family. Homodimer.

Functionally, tropomyosin, in association with the troponin complex, plays a central role in the calcium dependent regulation of muscle contraction. May also regulate motor systems required to maintain nuclear integrity and apico-basal polarity during embryogenesis. The polypeptide is Tropomyosin-2 (Tm2) (Drosophila melanogaster (Fruit fly)).